The primary structure comprises 206 residues: Probable thymidylate kinase (206 aa).

An ATP-binding site is contributed by 10–17 (GIDGSGKS).

This sequence belongs to the thymidylate kinase family.

It carries out the reaction dTMP + ATP = dTDP + ADP. This Methanosarcina acetivorans (strain ATCC 35395 / DSM 2834 / JCM 12185 / C2A) protein is Probable thymidylate kinase.